A 57-amino-acid chain; its full sequence is Preprotein translocase subunit SecG (57 aa).

At Met1–Asp33 the chain is on the cytoplasmic side. Residues Pro34–Ile55 form a helical membrane-spanning segment. Residues Pro56 to Pro57 lie on the Extracellular side of the membrane.

Belongs to the SEC61-beta family. In terms of assembly, component of the protein translocase complex. Heterotrimer consisting of alpha (SecY), beta (SecG) and gamma (SecE) subunits. Can form oligomers of the heterotrimer.

The protein localises to the cell membrane. Involved in protein export. The function of the beta subunit is unknown, but it may be involved in stabilization of the trimeric complex. This chain is Preprotein translocase subunit SecG, found in Metallosphaera sedula (strain ATCC 51363 / DSM 5348 / JCM 9185 / NBRC 15509 / TH2).